Consider the following 638-residue polypeptide: E3 ubiquitin-protein ligase TRIM47 (638 aa).

N-acetylmethionine is present on Met-1. The RING-type zinc finger occupies 9–58 (CPICLEPLREPVTLPCGHNFCLACLGALWPHRGASGAGGPGGAARCPLCQ). Thr-72 carries the phosphothreonine modification. A disordered region spans residues 79-119 (LRQGSGPGSGPGPAPALAPEPSAPSALPSVPEPSAPCAPEP). Composition is skewed to pro residues over residues 88–100 (GPGP…PEPS) and 108–119 (VPEPSAPCAPEP). The B box-type zinc finger occupies 177 to 217 (LEESLCPRHLRPLERYCRAERVCLCEACAAQEHRGHELVPL). Cys-182, His-185, Cys-204, and His-209 together coordinate Zn(2+). The stretch at 296–324 (MLGRSQGDLRRQEEQRSRLSRARQNLSQV) forms a coiled coil. Disordered regions lie at residues 300–322 (SQGD…QNLS) and 384–411 (LRGP…LEST). Over residues 302–312 (GDLRRQEEQRS) the composition is skewed to basic and acidic residues. In terms of domain architecture, B30.2/SPRY spans 410–631 (STNLLESEAP…LQIGPLKKSC (222 aa)). Ser-461 is subject to Phosphoserine. The residue at position 582 (Arg-582) is an Omega-N-methylarginine. At Ser-588 the chain carries Phosphoserine.

It belongs to the TRIM/RBCC family. Low expression in most tissues. Higher expression in kidney tubular cells. Overexpressed in astrocytoma tumor cells.

It is found in the cytoplasm. Its subcellular location is the nucleus. It catalyses the reaction S-ubiquitinyl-[E2 ubiquitin-conjugating enzyme]-L-cysteine + [acceptor protein]-L-lysine = [E2 ubiquitin-conjugating enzyme]-L-cysteine + N(6)-ubiquitinyl-[acceptor protein]-L-lysine.. It participates in protein modification; protein ubiquitination. E3 ubiquitin-protein ligase that mediates the ubiquitination and proteasomal degradation of CYLD. In Homo sapiens (Human), this protein is E3 ubiquitin-protein ligase TRIM47.